A 340-amino-acid polypeptide reads, in one-letter code: uncharacterized protein (340 aa).

Residues 1-23 (MQKKVLSLVLVLAVLESIVPVSA) form the signal peptide.

This is an uncharacterized protein from Archaeoglobus fulgidus (strain ATCC 49558 / DSM 4304 / JCM 9628 / NBRC 100126 / VC-16).